Reading from the N-terminus, the 307-residue chain is 2-phospho-L-lactate transferase (307 aa).

7,8-didemethyl-8-hydroxy-5-deazariboflavin contacts are provided by aspartate 48 and lysine 87.

This sequence belongs to the CofD family. In terms of assembly, homodimer. It depends on Mg(2+) as a cofactor.

It carries out the reaction (2S)-lactyl-2-diphospho-5'-guanosine + 7,8-didemethyl-8-hydroxy-5-deazariboflavin = oxidized coenzyme F420-0 + GMP + H(+). It participates in cofactor biosynthesis; coenzyme F420 biosynthesis. In terms of biological role, catalyzes the transfer of the 2-phospholactate moiety from (2S)-lactyl-2-diphospho-5'-guanosine to 7,8-didemethyl-8-hydroxy-5-deazariboflavin (FO) with the formation of oxidized coenzyme F420-0 and GMP. The protein is 2-phospho-L-lactate transferase of Methanosarcina acetivorans (strain ATCC 35395 / DSM 2834 / JCM 12185 / C2A).